Reading from the N-terminus, the 129-residue chain is Aspartate 1-decarboxylase (129 aa).

The active-site Schiff-base intermediate with substrate; via pyruvic acid is Ser25. Ser25 bears the Pyruvic acid (Ser) mark. Position 57 (Thr57) interacts with substrate. The Proton donor role is filled by Tyr58. 73-75 lines the substrate pocket; the sequence is GAA.

It belongs to the PanD family. In terms of assembly, heterooctamer of four alpha and four beta subunits. Pyruvate is required as a cofactor. In terms of processing, is synthesized initially as an inactive proenzyme, which is activated by self-cleavage at a specific serine bond to produce a beta-subunit with a hydroxyl group at its C-terminus and an alpha-subunit with a pyruvoyl group at its N-terminus.

It is found in the cytoplasm. It carries out the reaction L-aspartate + H(+) = beta-alanine + CO2. Its pathway is cofactor biosynthesis; (R)-pantothenate biosynthesis; beta-alanine from L-aspartate: step 1/1. In terms of biological role, catalyzes the pyruvoyl-dependent decarboxylation of aspartate to produce beta-alanine. This Chlorobium chlorochromatii (strain CaD3) protein is Aspartate 1-decarboxylase.